The chain runs to 663 residues: Protein MICRORCHIDIA 6 (663 aa).

The interval 1 to 77 is disordered; that stretch reads MSHDRSVNVS…PADDAGVTSS (77 aa). Residues 49 to 62 show a composition bias toward polar residues; it reads SVGQSAGQSSTSVV. Residues 552–559 carry the Nuclear localization signal motif; it reads KRKEHPDS. Positions 614–659 form a coiled coil; that stretch reads DRKVRSQNLEVKAMNLRSELENYKSEYERLMVELQALDLVKDEHRR.

This sequence belongs to the MORC ATPase protein family. In terms of assembly, homodimer and heterodimers with MORC1/CRT1 and MORC2. Interacts directly with SUVH9. Component of an RNA-directed DNA methylation (RdDM) complex that contains at least MORC6, MORC1/CRT1, MORC2, SWI3D and SUVH9. Stimulated by interaction with DMS3. Interacts with IDN2, SWI3B, SWI3C and SWI3D. Mg(2+) serves as cofactor. Requires Mn(2+) as cofactor.

It localises to the nucleus. Its activity is regulated as follows. Stimulated by DMS3. Functionally, involved in RNA-directed DNA methylation (RdDM) as a component of the RdDM machinery and required for gene silencing. Together with SUVH2 and SUVH9, regulates the silencing of some transposable elements (TEs). Exhibits ATPase activity. May also be involved in the regulation of chromatin architecture/condensation to maintain gene silencing. Binds DNA/RNA in a non-specific manner and exhibits endonuclease activity. Probably involved in DNA repair. Positive regulator of defense against the oomycete Hyaloperonospora arabidopsidis (Hpa). This Arabidopsis thaliana (Mouse-ear cress) protein is Protein MICRORCHIDIA 6.